A 119-amino-acid polypeptide reads, in one-letter code: MIIGIGIDIIELNRIEKMLDGKLKFMERILTENERNVAMELKGSRLTEFVAGRFAAKEAYSKAVGTGIGKEVSFLDIEVKNDERGKPILITSTEYIVHLSISHSKEFAVAQVVLESLSR.

Residues aspartate 8 and glutamate 58 each contribute to the Mg(2+) site.

This sequence belongs to the P-Pant transferase superfamily. AcpS family. Requires Mg(2+) as cofactor.

It localises to the cytoplasm. The catalysed reaction is apo-[ACP] + CoA = holo-[ACP] + adenosine 3',5'-bisphosphate + H(+). Functionally, transfers the 4'-phosphopantetheine moiety from coenzyme A to a Ser of acyl-carrier-protein. In Bacillus cereus (strain ATCC 14579 / DSM 31 / CCUG 7414 / JCM 2152 / NBRC 15305 / NCIMB 9373 / NCTC 2599 / NRRL B-3711), this protein is Holo-[acyl-carrier-protein] synthase.